We begin with the raw amino-acid sequence, 431 residues long: F-box protein pof14 (431 aa).

The F-box; atypical domain occupies 172–186; that stretch reads CPDEILQLIFSYCYD.

As to quaternary structure, component of the E3 ubiquitin ligase Skp1-Cullin-1-F-box (SCF) complex. Interacts with skp1, cul1 and erg9.

The protein resides in the cytoplasm. It localises to the nucleus. The protein localises to the endoplasmic reticulum. Functionally, expression is induced during oxidative stress. Plays an essential, SCF-independent, role in the stress response to hydrogen peroxide for survival, by negatively regulating ergosterol synthesis via direct binding to the squalene synthase erg9. This chain is F-box protein pof14 (pof14), found in Schizosaccharomyces pombe (strain 972 / ATCC 24843) (Fission yeast).